We begin with the raw amino-acid sequence, 401 residues long: Tyrosine--tRNA ligase (401 aa).

The short motif at 41–50 (PSRPDLHLGH) is the 'HIGH' region element. Positions 225 to 229 (KMSKS) match the 'KMSKS' region motif. An ATP-binding site is contributed by lysine 228. In terms of domain architecture, S4 RNA-binding spans 334–395 (KNIVDLLVEI…GKRKFYRISG (62 aa)).

The protein belongs to the class-I aminoacyl-tRNA synthetase family. TyrS type 2 subfamily. Homodimer.

Its subcellular location is the cytoplasm. It catalyses the reaction tRNA(Tyr) + L-tyrosine + ATP = L-tyrosyl-tRNA(Tyr) + AMP + diphosphate + H(+). In terms of biological role, catalyzes the attachment of tyrosine to tRNA(Tyr) in a two-step reaction: tyrosine is first activated by ATP to form Tyr-AMP and then transferred to the acceptor end of tRNA(Tyr). In Thermotoga maritima (strain ATCC 43589 / DSM 3109 / JCM 10099 / NBRC 100826 / MSB8), this protein is Tyrosine--tRNA ligase.